The sequence spans 544 residues: Probable protein kinase UbiB (544 aa).

A Protein kinase domain is found at 123–505 (EFDEQALASA…GRQKSHNVRS (383 aa)). ATP contacts are provided by residues 129-137 (LASASIAQV) and Lys-156. Asp-291 (proton acceptor) is an active-site residue. A helical transmembrane segment spans residues 522–540 (LPLWLSCGTLVTVLLVLLL).

It belongs to the ABC1 family. UbiB subfamily.

It is found in the cell inner membrane. It functions in the pathway cofactor biosynthesis; ubiquinone biosynthesis [regulation]. In terms of biological role, is probably a protein kinase regulator of UbiI activity which is involved in aerobic coenzyme Q (ubiquinone) biosynthesis. This Actinobacillus pleuropneumoniae serotype 7 (strain AP76) protein is Probable protein kinase UbiB.